The primary structure comprises 577 residues: Aspartate--tRNA(Asp/Asn) ligase (577 aa).

Glutamate 171 contributes to the L-aspartate binding site. Positions 195-198 are aspartate; sequence QLFK. Arginine 217 provides a ligand contact to L-aspartate. Residues 217–219 and glutamine 226 each bind ATP; that span reads RDE. Position 444 (histidine 444) interacts with L-aspartate. Glutamate 474 contacts ATP. Residue arginine 481 coordinates L-aspartate. Residue 526–529 coordinates ATP; it reads GFDR.

This sequence belongs to the class-II aminoacyl-tRNA synthetase family. Type 1 subfamily. Homodimer.

It is found in the cytoplasm. It carries out the reaction tRNA(Asx) + L-aspartate + ATP = L-aspartyl-tRNA(Asx) + AMP + diphosphate. Aspartyl-tRNA synthetase with relaxed tRNA specificity since it is able to aspartylate not only its cognate tRNA(Asp) but also tRNA(Asn). Reaction proceeds in two steps: L-aspartate is first activated by ATP to form Asp-AMP and then transferred to the acceptor end of tRNA(Asp/Asn). This Helicobacter pylori (strain G27) protein is Aspartate--tRNA(Asp/Asn) ligase.